The following is a 503-amino-acid chain: Guanosine-5'-triphosphate,3'-diphosphate pyrophosphatase (503 aa).

The protein belongs to the GppA/Ppx family. GppA subfamily.

It carries out the reaction guanosine 3'-diphosphate 5'-triphosphate + H2O = guanosine 3',5'-bis(diphosphate) + phosphate + H(+). Its pathway is purine metabolism; ppGpp biosynthesis; ppGpp from GTP: step 2/2. Functionally, catalyzes the conversion of pppGpp to ppGpp. Guanosine pentaphosphate (pppGpp) is a cytoplasmic signaling molecule which together with ppGpp controls the 'stringent response', an adaptive process that allows bacteria to respond to amino acid starvation, resulting in the coordinated regulation of numerous cellular activities. This is Guanosine-5'-triphosphate,3'-diphosphate pyrophosphatase from Pseudoalteromonas atlantica (strain T6c / ATCC BAA-1087).